Reading from the N-terminus, the 947-residue chain is Isoleucine--tRNA ligase (947 aa).

Residues 57–67 (PYANGNIHLGH) carry the 'HIGH' region motif. Glutamate 568 is an L-isoleucyl-5'-AMP binding site. A 'KMSKS' region motif is present at residues 609–613 (KMSKS). An ATP-binding site is contributed by lysine 612. Zn(2+) contacts are provided by cysteine 908, cysteine 911, cysteine 926, and cysteine 929.

Belongs to the class-I aminoacyl-tRNA synthetase family. IleS type 1 subfamily. As to quaternary structure, monomer. Requires Zn(2+) as cofactor.

Its subcellular location is the cytoplasm. It catalyses the reaction tRNA(Ile) + L-isoleucine + ATP = L-isoleucyl-tRNA(Ile) + AMP + diphosphate. Catalyzes the attachment of isoleucine to tRNA(Ile). As IleRS can inadvertently accommodate and process structurally similar amino acids such as valine, to avoid such errors it has two additional distinct tRNA(Ile)-dependent editing activities. One activity is designated as 'pretransfer' editing and involves the hydrolysis of activated Val-AMP. The other activity is designated 'posttransfer' editing and involves deacylation of mischarged Val-tRNA(Ile). This is Isoleucine--tRNA ligase from Persephonella marina (strain DSM 14350 / EX-H1).